The following is a 256-amino-acid chain: Phosphoribosylaminoimidazole-succinocarboxamide synthase (256 aa).

It belongs to the SAICAR synthetase family.

It carries out the reaction 5-amino-1-(5-phospho-D-ribosyl)imidazole-4-carboxylate + L-aspartate + ATP = (2S)-2-[5-amino-1-(5-phospho-beta-D-ribosyl)imidazole-4-carboxamido]succinate + ADP + phosphate + 2 H(+). The protein operates within purine metabolism; IMP biosynthesis via de novo pathway; 5-amino-1-(5-phospho-D-ribosyl)imidazole-4-carboxamide from 5-amino-1-(5-phospho-D-ribosyl)imidazole-4-carboxylate: step 1/2. In Synechococcus sp. (strain JA-3-3Ab) (Cyanobacteria bacterium Yellowstone A-Prime), this protein is Phosphoribosylaminoimidazole-succinocarboxamide synthase.